The chain runs to 276 residues: Putative glycosyltransferase 6 domain-containing protein 1 (276 aa).

The Cytoplasmic portion of the chain corresponds to 1–6; it reads MNSKRM. The chain crosses the membrane as a helical; Signal-anchor for type II membrane protein span at residues 7–23; sequence LLLVLFAFSLMLVERYF. At 24 to 276 the chain is on the lumenal side; that stretch reads RNHQVEELRL…NKYFYLNKPT (253 aa). Asn-74 carries N-linked (GlcNAc...) asparagine glycosylation. Residues 82 to 87, 173 to 175, and 195 to 198 contribute to the substrate site; these read FATGRF, AAN, and HAWW. Catalysis depends on Glu-263, which acts as the Nucleophile.

The protein belongs to the glycosyltransferase 6 family. It depends on Mn(2+) as a cofactor. As to expression, expressed in both healthy and inflamed gingival tissue samples at similar levels, with higher expression in the gingival connective tissue compared to gingival epithelium. Strongest expression in testis, followed by leukocytes.

It is found in the membrane. This is Putative glycosyltransferase 6 domain-containing protein 1 (GLT6D1) from Homo sapiens (Human).